We begin with the raw amino-acid sequence, 318 residues long: DNA-directed RNA polymerase subunit alpha 2 (318 aa).

Positions 1–227 (MALENLLHPT…NQLRNIVDIE (227 aa)) are alpha N-terminal domain (alpha-NTD). Positions 242–318 (INPILLKHVE…TLIENWPQDL (77 aa)) are alpha C-terminal domain (alpha-CTD).

This sequence belongs to the RNA polymerase alpha chain family. In terms of assembly, homodimer. The RNAP catalytic core consists of 2 alpha, 1 beta, 1 beta' and 1 omega subunit. When a sigma factor is associated with the core the holoenzyme is formed, which can initiate transcription.

It catalyses the reaction RNA(n) + a ribonucleoside 5'-triphosphate = RNA(n+1) + diphosphate. Its function is as follows. DNA-dependent RNA polymerase catalyzes the transcription of DNA into RNA using the four ribonucleoside triphosphates as substrates. The sequence is that of DNA-directed RNA polymerase subunit alpha 2 from Francisella tularensis subsp. novicida (strain U112).